The following is a 396-amino-acid chain: Anhydro-N-acetylmuramic acid kinase (396 aa).

21 to 28 (GTSADGID) is an ATP binding site.

The protein belongs to the anhydro-N-acetylmuramic acid kinase family.

The catalysed reaction is 1,6-anhydro-N-acetyl-beta-muramate + ATP + H2O = N-acetyl-D-muramate 6-phosphate + ADP + H(+). The protein operates within amino-sugar metabolism; 1,6-anhydro-N-acetylmuramate degradation. Its pathway is cell wall biogenesis; peptidoglycan recycling. Its function is as follows. Catalyzes the specific phosphorylation of 1,6-anhydro-N-acetylmuramic acid (anhMurNAc) with the simultaneous cleavage of the 1,6-anhydro ring, generating MurNAc-6-P. Is required for the utilization of anhMurNAc either imported from the medium or derived from its own cell wall murein, and thus plays a role in cell wall recycling. This Caldanaerobacter subterraneus subsp. tengcongensis (strain DSM 15242 / JCM 11007 / NBRC 100824 / MB4) (Thermoanaerobacter tengcongensis) protein is Anhydro-N-acetylmuramic acid kinase.